A 1993-amino-acid polypeptide reads, in one-letter code: Otoferlin (1993 aa).

The 98-residue stretch at 1-98 folds into the C2 1 domain; that stretch reads MALIVHLKTV…VEENRVEVSD (98 aa). Residues 1 to 1959 lie on the Cytoplasmic side of the membrane; it reads MALIVHLKTV…IKYLICTRYK (1959 aa). The disordered stretch occupies residues 127–212; it reads PWDDGDFLGD…KEEPQRQDEP (86 aa). Acidic residues predominate over residues 129–145; the sequence is DDGDFLGDESLQEEEKD. Composition is skewed to basic and acidic residues over residues 163-186 and 202-211; these read PGEKSFRSKGKEKTKGGRDGEHKA and HKEEPQRQDE. 2 consecutive C2 domains span residues 251–372 and 415–546; these read KRSK…HKWA and IEGN…FLPT. The tract at residues 654–708 is disordered; it reads NYGNEVDGTSRPQRPRPRKEPGDEEEVDLIQNSSDDEGDEAGDLASVSSTPPMRP. Acidic residues predominate over residues 675-695; sequence GDEEEVDLIQNSSDDEGDEAG. Positions 807-836 form a coiled coil; it reads RERLKSCMRELESMGQQAKSLRAQVKRHTV. C2 domains are found at residues 959 to 1084 and 1131 to 1257; these read LHSF…PPRF and RGPI…ANWN. Residues D991, D997, D1053, D1055, and D1061 each coordinate Ca(2+). Disordered regions lie at residues 1294 to 1318 and 1339 to 1398; these read AEDEKERKKKKKKGPSEEAEEEEPD and LRQH…EKKK. Positions 1348–1357 are enriched in acidic residues; the sequence is DLEEKEEMDS. Over residues 1366 to 1379 the composition is skewed to basic and acidic residues; the sequence is KNKEKSRAAKEEKK. C2 domains are found at residues 1460–1589 and 1710–1861; these read LPED…ATCG and DMPA…KQCT. Ca(2+) is bound by residues D1504, D1510, D1559, D1561, D1567, D1832, S1835, and D1838. Residues 1960-1980 form a helical membrane-spanning segment; the sequence is WLIIKIVLALLGLLMLALFLY. Residues 1981–1993 are Extracellular-facing; sequence SLPGYMVKKLLGA.

It belongs to the ferlin family. Interacts with SNAP25; the interaction is direct. Interacts with STX1; the interaction is direct. Interacts with RAB8B. It depends on Ca(2+) as a cofactor. As to expression, isoform 1 is expressed in the cochlea and brain. Expressed in cerebellum (Purkinje cells), hippocampus (granule cells of the dentate gyrus and in pyramidal cells of the CA1-CA3 region) and cortex (stellate and pyramidal cells). Expressed in hair cells of vestibular organs such as the saccule, utricle and crista ampullari. Expressed in the cochlear inner and outer cells (IHCs and OHCs) (at protein level). Expressed in brain: brainstem, cerebellum (granules cells and Purkinje cell layer), cortex (layers IV and V), inferior colliculus, superior colliculus and hippocampus (granule cells of the dentate gyrus and in pyramidal cells of the CA1-CA3 region).

The protein resides in the cytoplasmic vesicle. It is found in the secretory vesicle. The protein localises to the synaptic vesicle membrane. It localises to the basolateral cell membrane. Its subcellular location is the endoplasmic reticulum membrane. The protein resides in the golgi apparatus membrane. It is found in the presynaptic cell membrane. The protein localises to the cell membrane. In terms of biological role, key calcium ion sensor involved in the Ca(2+)-triggered synaptic vesicle-plasma membrane fusion and in the control of neurotransmitter release at these output synapses. Interacts in a calcium-dependent manner to the presynaptic SNARE proteins at ribbon synapses of cochlear inner hair cells (IHCs) to trigger exocytosis of neurotransmitter. Also essential to synaptic exocytosis in immature outer hair cells (OHCs). May also play a role within the recycling of endosomes. The sequence is that of Otoferlin (Otof) from Rattus norvegicus (Rat).